The following is a 127-amino-acid chain: Glycine cleavage system H protein (127 aa).

The Lipoyl-binding domain occupies 24–105; sequence TALVGITDFA…YGEGWMVKMK (82 aa). An N6-lipoyllysine modification is found at Lys65.

This sequence belongs to the GcvH family. The glycine cleavage system is composed of four proteins: P, T, L and H. The cofactor is (R)-lipoate.

Its function is as follows. The glycine cleavage system catalyzes the degradation of glycine. The H protein shuttles the methylamine group of glycine from the P protein to the T protein. This chain is Glycine cleavage system H protein, found in Chlorobium phaeovibrioides (strain DSM 265 / 1930) (Prosthecochloris vibrioformis (strain DSM 265)).